Here is a 177-residue protein sequence, read N- to C-terminus: MSRVGKNPVSVPANVEVRLSGSEVEVKGPLGMLRHELVSDISIERKGESLLVKAADDSKHANAMWGTTRALLANMVKGVTTGFEKRLILVGVGYRAQAADNVLNLTLGFSHPIAHKMPEGIKVETPSQTEVVIKGMDKQQVGQVAADVRAYREPEPYKGKGVRYADEVIVLKETKKK.

This sequence belongs to the universal ribosomal protein uL6 family. In terms of assembly, part of the 50S ribosomal subunit.

In terms of biological role, this protein binds to the 23S rRNA, and is important in its secondary structure. It is located near the subunit interface in the base of the L7/L12 stalk, and near the tRNA binding site of the peptidyltransferase center. The chain is Large ribosomal subunit protein uL6 from Nitrosospira multiformis (strain ATCC 25196 / NCIMB 11849 / C 71).